Here is a 179-residue protein sequence, read N- to C-terminus: Large ribosomal subunit protein uL5 (179 aa).

The protein belongs to the universal ribosomal protein uL5 family. In terms of assembly, part of the 50S ribosomal subunit; part of the 5S rRNA/L5/L18/L25 subcomplex. Contacts the 5S rRNA and the P site tRNA. Forms a bridge to the 30S subunit in the 70S ribosome.

In terms of biological role, this is one of the proteins that bind and probably mediate the attachment of the 5S RNA into the large ribosomal subunit, where it forms part of the central protuberance. In the 70S ribosome it contacts protein S13 of the 30S subunit (bridge B1b), connecting the 2 subunits; this bridge is implicated in subunit movement. Contacts the P site tRNA; the 5S rRNA and some of its associated proteins might help stabilize positioning of ribosome-bound tRNAs. This chain is Large ribosomal subunit protein uL5, found in Prochlorococcus marinus (strain NATL2A).